Reading from the N-terminus, the 873-residue chain is Alanine--tRNA ligase (873 aa).

Residues H562, H566, C664, and H668 each coordinate Zn(2+).

It belongs to the class-II aminoacyl-tRNA synthetase family. Zn(2+) serves as cofactor.

The protein localises to the cytoplasm. The catalysed reaction is tRNA(Ala) + L-alanine + ATP = L-alanyl-tRNA(Ala) + AMP + diphosphate. Its function is as follows. Catalyzes the attachment of alanine to tRNA(Ala) in a two-step reaction: alanine is first activated by ATP to form Ala-AMP and then transferred to the acceptor end of tRNA(Ala). Also edits incorrectly charged Ser-tRNA(Ala) and Gly-tRNA(Ala) via its editing domain. In Shewanella amazonensis (strain ATCC BAA-1098 / SB2B), this protein is Alanine--tRNA ligase.